A 90-amino-acid chain; its full sequence is Small ribosomal subunit protein uS15 (90 aa).

Belongs to the universal ribosomal protein uS15 family. As to quaternary structure, part of the 30S ribosomal subunit. Forms a bridge to the 50S subunit in the 70S ribosome, contacting the 23S rRNA.

In terms of biological role, one of the primary rRNA binding proteins, it binds directly to 16S rRNA where it helps nucleate assembly of the platform of the 30S subunit by binding and bridging several RNA helices of the 16S rRNA. Forms an intersubunit bridge (bridge B4) with the 23S rRNA of the 50S subunit in the ribosome. This chain is Small ribosomal subunit protein uS15, found in Wolbachia sp. subsp. Brugia malayi (strain TRS).